We begin with the raw amino-acid sequence, 166 residues long: NAD(P)H-quinone oxidoreductase subunit I, chloroplastic (166 aa).

4Fe-4S ferredoxin-type domains are found at residues 55–84 (GRIH…VDWK) and 95–124 (LNYS…MTEE). [4Fe-4S] cluster-binding residues include C64, C67, C70, C74, C104, C107, C110, and C114.

The protein belongs to the complex I 23 kDa subunit family. As to quaternary structure, NDH is composed of at least 16 different subunits, 5 of which are encoded in the nucleus. [4Fe-4S] cluster serves as cofactor.

Its subcellular location is the plastid. It is found in the chloroplast thylakoid membrane. The catalysed reaction is a plastoquinone + NADH + (n+1) H(+)(in) = a plastoquinol + NAD(+) + n H(+)(out). The enzyme catalyses a plastoquinone + NADPH + (n+1) H(+)(in) = a plastoquinol + NADP(+) + n H(+)(out). NDH shuttles electrons from NAD(P)H:plastoquinone, via FMN and iron-sulfur (Fe-S) centers, to quinones in the photosynthetic chain and possibly in a chloroplast respiratory chain. The immediate electron acceptor for the enzyme in this species is believed to be plastoquinone. Couples the redox reaction to proton translocation, and thus conserves the redox energy in a proton gradient. The sequence is that of NAD(P)H-quinone oxidoreductase subunit I, chloroplastic from Guardiola tulocarpus.